The following is a 68-amino-acid chain: uncharacterized protein (68 aa).

To B.subtilis XtrA.

This is an uncharacterized protein from Bacillus subtilis (strain 168).